The sequence spans 419 residues: Gamma-glutamyl phosphate reductase (419 aa).

It belongs to the gamma-glutamyl phosphate reductase family.

It is found in the cytoplasm. It catalyses the reaction L-glutamate 5-semialdehyde + phosphate + NADP(+) = L-glutamyl 5-phosphate + NADPH + H(+). It functions in the pathway amino-acid biosynthesis; L-proline biosynthesis; L-glutamate 5-semialdehyde from L-glutamate: step 2/2. Its function is as follows. Catalyzes the NADPH-dependent reduction of L-glutamate 5-phosphate into L-glutamate 5-semialdehyde and phosphate. The product spontaneously undergoes cyclization to form 1-pyrroline-5-carboxylate. This Nitratidesulfovibrio vulgaris (strain ATCC 29579 / DSM 644 / CCUG 34227 / NCIMB 8303 / VKM B-1760 / Hildenborough) (Desulfovibrio vulgaris) protein is Gamma-glutamyl phosphate reductase.